The primary structure comprises 179 residues: Auxin-responsive protein IAA15 (179 aa).

Residues 21–25 (LTLAL) carry the EAR-like (transcriptional repression) motif. A PB1 domain is found at 86–173 (RKYVKVALDG…SCKRMRLMKT (88 aa)).

This sequence belongs to the Aux/IAA family. In terms of assembly, homodimers and heterodimers.

The protein localises to the nucleus. Aux/IAA proteins are short-lived transcriptional factors that function as repressors of early auxin response genes at low auxin concentrations. Repression is thought to result from the interaction with auxin response factors (ARFs), proteins that bind to the auxin-responsive promoter element (AuxRE). Formation of heterodimers with ARF proteins may alter their ability to modulate early auxin response genes expression. In Arabidopsis thaliana (Mouse-ear cress), this protein is Auxin-responsive protein IAA15 (IAA15).